Reading from the N-terminus, the 520-residue chain is Glucose-1-phosphate adenylyltransferase small subunit, chloroplastic (520 aa).

The N-terminal 71 residues, 1–71 (MASVSAIGVL…RNPIIVSPKA (71 aa)), are a transit peptide targeting the chloroplast.

The protein belongs to the bacterial/plant glucose-1-phosphate adenylyltransferase family. In terms of assembly, heterotetramer. In terms of tissue distribution, leaves.

The protein resides in the plastid. The protein localises to the chloroplast. The catalysed reaction is alpha-D-glucose 1-phosphate + ATP + H(+) = ADP-alpha-D-glucose + diphosphate. Its pathway is glycan biosynthesis; starch biosynthesis. With respect to regulation, activated by 3'phosphoglycerate, inhibited by orthophosphate. Allosteric regulation. This protein plays a role in synthesis of starch. It catalyzes the synthesis of the activated glycosyl donor, ADP-glucose from Glc-1-P and ATP. This chain is Glucose-1-phosphate adenylyltransferase small subunit, chloroplastic (APS1), found in Arabidopsis thaliana (Mouse-ear cress).